A 126-amino-acid chain; its full sequence is Diadenosine hexaphosphate hydrolase (126 aa).

The 121-residue stretch at 1–121 (MELGAGGVVF…EDLGLLEVAL (121 aa)) folds into the Nudix hydrolase domain. Substrate-binding positions include 21-23 (DRM) and 30-32 (KGH). Residues 31–52 (GHPEPGESLEEAAVREVWEETG) carry the Nudix box motif. E46 and E50 together coordinate Mg(2+). Substrate is bound by residues 66 to 68 (YVN), R74, and E112.

The protein belongs to the Nudix hydrolase family. Monomer. It depends on Mg(2+) as a cofactor.

It carries out the reaction P(1),P(6)-bis(5'-adenosyl) hexaphosphate + H2O = 2 ATP + 2 H(+). The catalysed reaction is P(1),P(5)-bis(5'-adenosyl) pentaphosphate + H2O = ADP + ATP + 2 H(+). It catalyses the reaction P(1),P(4)-bis(5'-adenosyl) tetraphosphate + H2O = AMP + ATP + 2 H(+). Its activity is regulated as follows. Strongly inhibited by fluoride ions. In terms of biological role, specifically hydrolyzes (di)adenosine polyphosphates but not ATP or diadenosine triphosphate, generating ATP as the product. Diadenosine hexaphosphate (Ap6A) is the preferred substrate and hydrolysis yields 2 ATP. It is the only enzyme that symmetrically hydrolyzes Ap6A. It also hydrolyzes diadenosine pentaphosphate (Ap5A), diadenosine tetraphosphate (Ap4A) and adenosine tetraphosphate (p4A). This is Diadenosine hexaphosphate hydrolase from Thermus thermophilus.